The sequence spans 163 residues: Nucleotide-binding protein Spro_1084 (163 aa).

This sequence belongs to the YajQ family.

Nucleotide-binding protein. In Serratia proteamaculans (strain 568), this protein is Nucleotide-binding protein Spro_1084.